The chain runs to 220 residues: Iron-sulfur cluster repair protein YtfE (220 aa).

The protein belongs to the RIC family. YtfE subfamily. As to quaternary structure, homodimer.

It localises to the cytoplasm. Its function is as follows. Di-iron-containing protein involved in the repair of iron-sulfur clusters damaged by oxidative and nitrosative stress conditions. The chain is Iron-sulfur cluster repair protein YtfE from Shigella boydii serotype 18 (strain CDC 3083-94 / BS512).